The primary structure comprises 272 residues: Large ribosomal subunit protein uL29m (272 aa).

Disordered stretches follow at residues 1–29, 56–87, and 227–272; these read MAAAAMRPSMGALGRISSSTPSPLRPLTQ, KHRGESAIHRSGTRWRLSMSDEPLPRPVPRNK, and AAAT…TPRL. Residues 17 to 29 are compositionally biased toward low complexity; the sequence is SSSTPSPLRPLTQ. Low complexity-rich tracts occupy residues 227–238 and 249–259; these read AAATEGEQQAAE and PATAATPESAT. A compositionally biased stretch (polar residues) spans 260–272; that stretch reads IPSSQQQTDTPRL.

It belongs to the universal ribosomal protein uL29 family. In terms of assembly, component of the mitochondrial large ribosomal subunit. Mature mitochondrial ribosomes consist of a small (37S) and a large (54S) subunit. The 37S subunit contains at least 33 different proteins and 1 molecule of RNA (15S). The 54S subunit contains at least 45 different proteins and 1 molecule of RNA (21S).

It localises to the mitochondrion. In Chaetomium globosum (strain ATCC 6205 / CBS 148.51 / DSM 1962 / NBRC 6347 / NRRL 1970) (Soil fungus), this protein is Large ribosomal subunit protein uL29m (MRPL4).